A 142-amino-acid chain; its full sequence is Large ribosomal subunit protein uL11 (142 aa).

It belongs to the universal ribosomal protein uL11 family. Part of the ribosomal stalk of the 50S ribosomal subunit. Interacts with L10 and the large rRNA to form the base of the stalk. L10 forms an elongated spine to which L12 dimers bind in a sequential fashion forming a multimeric L10(L12)X complex. In terms of processing, one or more lysine residues are methylated.

Forms part of the ribosomal stalk which helps the ribosome interact with GTP-bound translation factors. The chain is Large ribosomal subunit protein uL11 from Yersinia pestis bv. Antiqua (strain Angola).